The chain runs to 335 residues: HTH-type transcriptional regulator LacR (335 aa).

One can recognise an HTH lacI-type domain in the interval 1-58; the sequence is MRTIKEIALESGYSPATVSRLLNNDPNLSITADTKNKILEIANKLGYWEDHQEKKIKP. A DNA-binding region (H-T-H motif) is located at residues 4 to 23; sequence IKEIALESGYSPATVSRLLN.

The protein operates within carbohydrate metabolism; lactose degradation [regulation]. Its function is as follows. Negatively regulates the transcription of the lactose utilization genes lacL and lacM. The chain is HTH-type transcriptional regulator LacR (lacR) from Lactobacillus helveticus (Lactobacillus suntoryeus).